Reading from the N-terminus, the 307-residue chain is Nitrogenase iron protein 2 (307 aa).

Residue 13-20 (GKGGIGKS) coordinates ATP. C101 serves as a coordination point for [4Fe-4S] cluster. R104 bears the ADP-ribosylarginine; by dinitrogenase reductase ADP-ribosyltransferase mark. C135 provides a ligand contact to [4Fe-4S] cluster. The tract at residues 285–307 (QLTETDKAAKESEKKQEDAEGEA) is disordered.

It belongs to the NifH/BchL/ChlL family. In terms of assembly, homodimer. Requires [4Fe-4S] cluster as cofactor. Post-translationally, the reversible ADP-ribosylation of Arg-104 inactivates the nitrogenase reductase and regulates nitrogenase activity.

It catalyses the reaction N2 + 8 reduced [2Fe-2S]-[ferredoxin] + 16 ATP + 16 H2O = H2 + 8 oxidized [2Fe-2S]-[ferredoxin] + 2 NH4(+) + 16 ADP + 16 phosphate + 6 H(+). The key enzymatic reactions in nitrogen fixation are catalyzed by the nitrogenase complex, which has 2 components: the iron protein and the molybdenum-iron protein. The protein is Nitrogenase iron protein 2 (nifH2) of Mastigocladus laminosus (Fischerella sp.).